The sequence spans 143 residues: Glutamate-rich protein 4 (143 aa).

The segment covering 90–106 has biased composition (acidic residues); sequence LEEEEEDDDEEEQEEEG. A disordered region spans residues 90-143; that stretch reads LEEEEEDDDEEEQEEEGEGKNCVEENKGLQGKQGEKCSGNPYPAQRLPDFEMTI. Over residues 107 to 116 the composition is skewed to basic and acidic residues; sequence EGKNCVEENK.

The polypeptide is Glutamate-rich protein 4 (Erich4) (Rattus norvegicus (Rat)).